The primary structure comprises 359 residues: Outer membrane protein assembly factor BamC (359 aa).

Residues 1 to 21 form the signal peptide; that stretch reads MSTLNKYKTLIIISSLAAVSS. Residue cysteine 22 is the site of N-palmitoyl cysteine attachment. Cysteine 22 carries S-diacylglycerol cysteine lipidation.

Belongs to the BamC family. In terms of assembly, part of the Bam complex.

The protein localises to the cell outer membrane. Functionally, part of the outer membrane protein assembly complex, which is involved in assembly and insertion of beta-barrel proteins into the outer membrane. The sequence is that of Outer membrane protein assembly factor BamC from Kangiella koreensis (strain DSM 16069 / JCM 12317 / KCTC 12182 / SW-125).